We begin with the raw amino-acid sequence, 152 residues long: Arginine repressor (152 aa).

This sequence belongs to the ArgR family.

Its subcellular location is the cytoplasm. The protein operates within amino-acid biosynthesis; L-arginine biosynthesis [regulation]. Regulates arginine biosynthesis genes. The protein is Arginine repressor of Lactococcus lactis subsp. cremoris (strain MG1363).